A 346-amino-acid chain; its full sequence is MTDMWDVRITDTSLRDGSHHKRHQFTKDEVGAIVAALDAAGVPVIEVTHGDGLGGSSFNYGFSKTPEQELIKLAAATAKEARIAFLMLPGVGTKDDIKEARDNGGSICRIATHCTEADVSIQHFGLARELGLETVGFLMMAHTIAPEKLAAQARIMADAGCQCVYVVDSAGALVLDGVADRVSALVAELGEDAQVGFHGHENLGLGVANSVAAVRAGAKQIDGSCRRFGAGAGNAPVEALIGVFDKIGVKTGIDFFDIADAAEDVVRPAMPAECLLDRNALIMGYSGVYSSFLKHAVRQAERYGVPASALLHRAGQRKLIGGQEDQLIDIALEIKRELDSGAAVTH.

The Pyruvate carboxyltransferase domain occupies 7–259 (VRITDTSLRD…KTGIDFFDIA (253 aa)). 15-16 (RD) is a substrate binding site. Aspartate 16 provides a ligand contact to Mn(2+). The Proton acceptor role is filled by histidine 19. Substrate is bound by residues serine 169 and histidine 198. Mn(2+)-binding residues include histidine 198 and histidine 200. Tyrosine 289 is a binding site for substrate.

It belongs to the 4-hydroxy-2-oxovalerate aldolase family. Homodimer. Forms a heterotetramer composed of two aldolase (HsaF) and two dehydrogenase (HsaG) subunits. Requires Mn(2+) as cofactor.

The catalysed reaction is (S)-4-hydroxy-2-oxohexanoate = propanal + pyruvate. It catalyses the reaction (S)-4-hydroxy-2-oxopentanoate = acetaldehyde + pyruvate. Functionally, involved in cholesterol degradation. Catalyzes the retro-aldol cleavage of 4-hydroxy-2-oxohexanoate (HOHA) to pyruvate and propanal. Can also catalyze the cleavage of 4-hydroxy-2-oxopentanoate (HOPA) to pyruvate and acetaldehyde. The aldehydes produced by this reaction are directly channeled to the dehydrogenase HsaG. In Mycobacterium bovis (strain ATCC BAA-935 / AF2122/97), this protein is 4-hydroxy-2-oxohexanoate aldolase.